Reading from the N-terminus, the 484-residue chain is MAARPGAITNADSASGGGEEEGKHVKPFTPEKAKEIIMCLQQPAVFYNMVFDWPAQHWTAKHLSEVLHGKQIRFRMGTKSTDTAPQFETACNYVEATLEEFLSWNSDQSSISGAFRDYDHSKFWAYADYKYFVSLFEDKTDIFQDVIWSDFGFPGRNGQESTLWIGSLGAHTPCHLDTYGCNLVFQVQGRKRWHLFPPEDTPFLYPTRIPYEESSVFSKINVVNPDLKRFPQFRKARRHMVTLSPGQVLFVPRHWWHYVESIDPVTVSINSWIELEEDHQTRVEEAITRMLVCALKTAENPHNTRAWLNPTELEETSHEINCHYLNGAISAFFNHYGTSEVVETQALRTNREYTIKEELNMHSHVGVEQAGGHNLSSETVKQEAASPFGLDLVPVTPSSEEPSSERGGIFENDGEDFVSKNGKSFGKRQRMMSESENAVVEQIASDRTVAVSQTFVSTDDLLDCLVNPQVTRIVAQLLIQGRST.

The segment at methionine 1 to lysine 26 is disordered. The interaction with HSPB1 stretch occupies residues glutamate 88–arginine 208. The JmjC domain maps to tryptophan 124–threonine 288. Residues threonine 396 to glutamine 429 form a disordered region.

Interacts with CRYAB and HSPB1.

It is found in the cytoplasm. May play a role in cellular stress response. This is HSPB1-associated protein 1 (HSPBAP1) from Bos taurus (Bovine).